We begin with the raw amino-acid sequence, 115 residues long: uncharacterized protein (115 aa).

This is an uncharacterized protein from Caenorhabditis elegans.